A 251-amino-acid polypeptide reads, in one-letter code: Protein unc-119 homolog B (251 aa).

Positions 1-13 (MSGSNPKAATAGS) are enriched in polar residues. Residues 1 to 56 (MSGSNPKAATAGSQAGPGGLVAGKEEKKKAGGGVLNRLKARRQGPPHTPDDGSGAA) form a disordered region. Residue Ser2 is modified to N-acetylserine. Lys24 carries the post-translational modification N6-acetyllysine. Position 142 (Tyr142) interacts with tetradecanoate.

It belongs to the PDE6D/unc-119 family. As to quaternary structure, found in a complex with ARL3, RP2 and UNC119B; RP2 induces hydrolysis of GTP ARL3 in the complex, leading to the release of UNC119B. Interacts with NPHP3 (when myristoylated). Interacts with CYS1 (when myristoylated). Interacts with MACIR; interaction only takes place when UNC119B is not liganded with myristoylated proteins.

It localises to the cell projection. It is found in the cilium. In terms of biological role, myristoyl-binding protein that acts as a cargo adapter: specifically binds the myristoyl moiety of a subset of N-terminally myristoylated proteins and is required for their localization. Binds myristoylated NPHP3 and plays a key role in localization of NPHP3 to the primary cilium membrane. Does not bind all myristoylated proteins. Probably plays a role in trafficking proteins in photoreceptor cells. This is Protein unc-119 homolog B (Unc119b) from Mus musculus (Mouse).